Here is a 228-residue protein sequence, read N- to C-terminus: 7-cyano-7-deazaguanine synthase (228 aa).

11–21 (LSGGLDSATCL) contacts ATP. Cys-191, Cys-201, Cys-204, and Cys-207 together coordinate Zn(2+).

This sequence belongs to the QueC family. The cofactor is Zn(2+).

It carries out the reaction 7-carboxy-7-deazaguanine + NH4(+) + ATP = 7-cyano-7-deazaguanine + ADP + phosphate + H2O + H(+). The protein operates within purine metabolism; 7-cyano-7-deazaguanine biosynthesis. Functionally, catalyzes the ATP-dependent conversion of 7-carboxy-7-deazaguanine (CDG) to 7-cyano-7-deazaguanine (preQ(0)). The polypeptide is 7-cyano-7-deazaguanine synthase (Azoarcus sp. (strain BH72)).